Consider the following 1400-residue polypeptide: DNA-directed RNA polymerase subunit beta' (1400 aa).

Positions 71, 73, 86, and 89 each coordinate Zn(2+). Residues Asp462, Asp464, and Asp466 each contribute to the Mg(2+) site. Cys811, Cys885, Cys892, and Cys895 together coordinate Zn(2+).

Belongs to the RNA polymerase beta' chain family. The RNAP catalytic core consists of 2 alpha, 1 beta, 1 beta' and 1 omega subunit. When a sigma factor is associated with the core the holoenzyme is formed, which can initiate transcription. Mg(2+) serves as cofactor. The cofactor is Zn(2+).

It catalyses the reaction RNA(n) + a ribonucleoside 5'-triphosphate = RNA(n+1) + diphosphate. Its function is as follows. DNA-dependent RNA polymerase catalyzes the transcription of DNA into RNA using the four ribonucleoside triphosphates as substrates. The protein is DNA-directed RNA polymerase subunit beta' of Brucella ovis (strain ATCC 25840 / 63/290 / NCTC 10512).